Consider the following 452-residue polypeptide: Exoglucanase 1 (452 aa).

An N-terminal signal peptide occupies residues 1 to 18 (MFSKFALTGSLLAGAVNA). N-linked (GlcNAc...) asparagine glycosylation occurs at Asn-75. The Nucleophile role is filled by Glu-230. Glu-235 serves as the catalytic Proton donor. N-linked (GlcNAc...) asparagine glycans are attached at residues Asn-335 and Asn-360.

This sequence belongs to the glycosyl hydrolase 7 (cellulase C) family.

It carries out the reaction Hydrolysis of (1-&gt;4)-beta-D-glucosidic linkages in cellulose and cellotetraose, releasing cellobiose from the non-reducing ends of the chains.. Its function is as follows. The biological conversion of cellulose to glucose generally requires three types of hydrolytic enzymes: (1) Endoglucanases which cut internal beta-1,4-glucosidic bonds; (2) Exocellobiohydrolases that cut the disaccharide cellobiose from the non-reducing end of the cellulose polymer chain; (3) Beta-1,4-glucosidases which hydrolyze the cellobiose and other short cello-oligosaccharides to glucose. The polypeptide is Exoglucanase 1 (CBH-1) (Cryphonectria parasitica (Chestnut blight fungus)).